We begin with the raw amino-acid sequence, 162 residues long: Flagellar assembly factor FliW (162 aa).

Belongs to the FliW family. As to quaternary structure, interacts with translational regulator CsrA and flagellin(s).

It is found in the cytoplasm. Its function is as follows. Acts as an anti-CsrA protein, binds CsrA and prevents it from repressing translation of its target genes, one of which is flagellin. Binds to flagellin and participates in the assembly of the flagellum. The protein is Flagellar assembly factor FliW of Alkaliphilus metalliredigens (strain QYMF).